The sequence spans 182 residues: Large ribosomal subunit protein uL10 (182 aa).

This sequence belongs to the universal ribosomal protein uL10 family. As to quaternary structure, part of the ribosomal stalk of the 50S ribosomal subunit. The N-terminus interacts with L11 and the large rRNA to form the base of the stalk. The C-terminus forms an elongated spine to which L12 dimers bind in a sequential fashion forming a multimeric L10(L12)X complex.

In terms of biological role, forms part of the ribosomal stalk, playing a central role in the interaction of the ribosome with GTP-bound translation factors. The chain is Large ribosomal subunit protein uL10 from Gluconacetobacter diazotrophicus (strain ATCC 49037 / DSM 5601 / CCUG 37298 / CIP 103539 / LMG 7603 / PAl5).